Here is a 390-residue protein sequence, read N- to C-terminus: Cathepsin D (390 aa).

The propeptide at Val1 to Gln44 is activation peptide. Residues Tyr59–Ala385 form the Peptidase A1 domain. 2 disulfides stabilise this stretch: Cys71–Cys140 and Cys90–Cys97. Asp77 is an active-site residue. N-linked (GlcNAc...) asparagine glycans are attached at residues Asn114 and Asn241. A disulfide bond links Cys264 and Cys268. Residue Asp273 is part of the active site. Residues Cys307 and Cys344 are joined by a disulfide bond.

It belongs to the peptidase A1 family. As to quaternary structure, consists of a light chain and a heavy chain. Interacts with ADAM30; this leads to activation of CTSD. Interacts with GRN; stabilizes CTSD; increases its proteolytic activity. N- and O-glycosylated. In terms of processing, undergoes proteolytic cleavage and activation by ADAM30.

It localises to the lysosome. The protein localises to the melanosome. The protein resides in the secreted. It is found in the extracellular space. It catalyses the reaction Specificity similar to, but narrower than, that of pepsin A. Does not cleave the 4-Gln-|-His-5 bond in B chain of insulin.. Functionally, acid protease active in intracellular protein breakdown. Plays a role in APP processing following cleavage and activation by ADAM30 which leads to APP degradation. This chain is Cathepsin D (CTSD), found in Bos taurus (Bovine).